Consider the following 200-residue polypeptide: Small ribosomal subunit protein uS4 (200 aa).

Positions threonine 22–lysine 42 are disordered. The S4 RNA-binding domain occupies alanine 92–lysine 152.

This sequence belongs to the universal ribosomal protein uS4 family. Part of the 30S ribosomal subunit. Contacts protein S5. The interaction surface between S4 and S5 is involved in control of translational fidelity.

Functionally, one of the primary rRNA binding proteins, it binds directly to 16S rRNA where it nucleates assembly of the body of the 30S subunit. Its function is as follows. With S5 and S12 plays an important role in translational accuracy. This Bacillus cytotoxicus (strain DSM 22905 / CIP 110041 / 391-98 / NVH 391-98) protein is Small ribosomal subunit protein uS4.